The primary structure comprises 133 residues: MIIGIGNDIIDIRRVQKTLDRFGDRFIERIFTEVEKAKSEGRRMRAASYAKRFAAKEACSKALGTGMRRGVFWKDMGVVNLRGGQPTMALTGGALERLKEMTPEGTEAVIHLTITDDHPQAQAFVIISVVPKP.

Mg(2+)-binding residues include Asp-8 and Glu-57.

This sequence belongs to the P-Pant transferase superfamily. AcpS family. Mg(2+) is required as a cofactor.

The protein resides in the cytoplasm. It carries out the reaction apo-[ACP] + CoA = holo-[ACP] + adenosine 3',5'-bisphosphate + H(+). Its function is as follows. Transfers the 4'-phosphopantetheine moiety from coenzyme A to a Ser of acyl-carrier-protein. This is Holo-[acyl-carrier-protein] synthase from Parvibaculum lavamentivorans (strain DS-1 / DSM 13023 / NCIMB 13966).